The chain runs to 274 residues: Putative septum site-determining protein MinD (274 aa).

ATP is bound at residue Lys-22 to Thr-29.

Belongs to the ParA family. MinD subfamily.

It localises to the plastid. The protein localises to the chloroplast. ATPase required for the correct placement of the division site. The polypeptide is Putative septum site-determining protein MinD (minD-A) (Nephroselmis olivacea (Green alga)).